The primary structure comprises 616 residues: Elongation factor 4 (616 aa).

Residues 14–195 (SRIRNFCIIA…EVIRQVPPPV (182 aa)) enclose the tr-type G domain. GTP-binding positions include 26–31 (DHGKST) and 142–145 (NKID).

Belongs to the TRAFAC class translation factor GTPase superfamily. Classic translation factor GTPase family. LepA subfamily.

Its subcellular location is the cell membrane. It carries out the reaction GTP + H2O = GDP + phosphate + H(+). Functionally, required for accurate and efficient protein synthesis under certain stress conditions. May act as a fidelity factor of the translation reaction, by catalyzing a one-codon backward translocation of tRNAs on improperly translocated ribosomes. Back-translocation proceeds from a post-translocation (POST) complex to a pre-translocation (PRE) complex, thus giving elongation factor G a second chance to translocate the tRNAs correctly. Binds to ribosomes in a GTP-dependent manner. The protein is Elongation factor 4 of Nocardia farcinica (strain IFM 10152).